The primary structure comprises 382 residues: Chaperone protein DnaJ 2 (382 aa).

The region spanning 4-68 (DYYGLLGVSK…DKRRIVDLGG (65 aa)) is the J domain. The segment at 132–214 (GVTKQVTVDT…CMGDGRIRAR (83 aa)) adopts a CR-type zinc-finger fold. The Zn(2+) site is built by Cys145, Cys148, Cys162, Cys165, Cys188, Cys191, Cys202, and Cys205. 4 CXXCXGXG motif repeats span residues 145–152 (CDRCQGKG), 162–169 (CDTCGGRG), 188–195 (CPTCRGVG), and 202–209 (CQQCMGDG).

The protein belongs to the DnaJ family. As to quaternary structure, homodimer. Interacts with RNase J. Requires Zn(2+) as cofactor.

Its subcellular location is the cytoplasm. Functionally, participates actively in the response to hyperosmotic and heat shock by preventing the aggregation of stress-denatured proteins and by disaggregating proteins, also in an autonomous, DnaK-independent fashion. Unfolded proteins bind initially to DnaJ; upon interaction with the DnaJ-bound protein, DnaK hydrolyzes its bound ATP, resulting in the formation of a stable complex. GrpE releases ADP from DnaK; ATP binding to DnaK triggers the release of the substrate protein, thus completing the reaction cycle. Several rounds of ATP-dependent interactions between DnaJ, DnaK and GrpE are required for fully efficient folding. Also involved, together with DnaK and GrpE, in the DNA replication of plasmids through activation of initiation proteins. Inhibits the beta-lactamase and RNase activity of RNase J. The chain is Chaperone protein DnaJ 2 from Mycobacterium tuberculosis (strain ATCC 25618 / H37Rv).